We begin with the raw amino-acid sequence, 233 residues long: Demethylmenaquinone methyltransferase (233 aa).

S-adenosyl-L-methionine contacts are provided by residues threonine 58, aspartate 79, and 106-107; that span reads NA.

It belongs to the class I-like SAM-binding methyltransferase superfamily. MenG/UbiE family.

The enzyme catalyses a 2-demethylmenaquinol + S-adenosyl-L-methionine = a menaquinol + S-adenosyl-L-homocysteine + H(+). It participates in quinol/quinone metabolism; menaquinone biosynthesis; menaquinol from 1,4-dihydroxy-2-naphthoate: step 2/2. Its function is as follows. Methyltransferase required for the conversion of demethylmenaquinol (DMKH2) to menaquinol (MKH2). The polypeptide is Demethylmenaquinone methyltransferase (Bacillus velezensis (strain DSM 23117 / BGSC 10A6 / LMG 26770 / FZB42) (Bacillus amyloliquefaciens subsp. plantarum)).